The chain runs to 87 residues: Large ribosomal subunit protein uL23c (87 aa).

Belongs to the universal ribosomal protein uL23 family. As to quaternary structure, part of the 50S ribosomal subunit.

It localises to the plastid. It is found in the chloroplast. Its function is as follows. Binds to 23S rRNA. This chain is Large ribosomal subunit protein uL23c (rpl23), found in Ostreococcus tauri.